The chain runs to 63 residues: Conotoxin Cal12.5 (63 aa).

A signal peptide spans M1 to G21.

This sequence belongs to the conotoxin O1 superfamily. Post-translationally, contains 4 disulfide bonds. As to expression, expressed by the venom duct.

The protein localises to the secreted. Its function is as follows. Probable neurotoxin. The protein is Conotoxin Cal12.5 of Californiconus californicus (California cone).